The sequence spans 207 residues: Small ribosomal subunit protein uS4c (207 aa).

Positions threonine 22–glutamine 51 are disordered. An S4 RNA-binding domain is found at methionine 97–leucine 158.

It belongs to the universal ribosomal protein uS4 family. Part of the 30S ribosomal subunit. Contacts protein S5. The interaction surface between S4 and S5 is involved in control of translational fidelity.

The protein localises to the plastid. It localises to the chloroplast. Its function is as follows. One of the primary rRNA binding proteins, it binds directly to 16S rRNA where it nucleates assembly of the body of the 30S subunit. In terms of biological role, with S5 and S12 plays an important role in translational accuracy. This chain is Small ribosomal subunit protein uS4c (rps4), found in Chlorella vulgaris (Green alga).